The following is a 65-amino-acid chain: MPKQKTHRASAKRFKRTGSGGLKRFRAFTSHRFHGKTKKQRRHLRKADLVSSGDFKRIKAMVTGL.

A compositionally biased stretch (basic residues) spans 1-16; the sequence is MPKQKTHRASAKRFKR. A disordered region spans residues 1–21; that stretch reads MPKQKTHRASAKRFKRTGSGG.

Belongs to the bacterial ribosomal protein bL35 family.

This Streptococcus pyogenes serotype M18 (strain MGAS8232) protein is Large ribosomal subunit protein bL35.